The primary structure comprises 645 residues: MFEISVHPVPDAVRQRAYLNDDDYQRLYRQSVENPDEFWGEQAKAFLDWFKPWHSVHHGDLRKGQATWFKGGQLNVAYNCIDRHLERRGEQIAIVWEGDNPSESAHITYRKLHHNVCRLANVLKSRGVEKGDRVCIYMPMIPEAAYAMLACARIGAVHSVVFGGFSPDSLRDRILDADCRTVITADEGVRGGKYIPLKQNVEKALKDCPDVSTVVVVERTQGDIPWVEGRDIWYHEALHAASADCPAEAMDAEDPLFILYTSGSTGKPKGVLHTTGGYLLGAAMTHKYVFDYHDGDVYWCTADVGWVTGHSYIVYGPLANGATTLMFEGVPNYPDASRFWQVIDKHQVNIFYTAPTAIRALMREGDAPVRQTSRSSLRLLGSVGEPINPEAWEWYYQVVGEKRCPILDTWWQTETGSILITPLPGATALKPGSATRPFFGVQPVLLDEKGKEIDGAGSGVLAIKASWPSQIRSVYGDHQRMIDTYFKPYPGYYFSGDGARRDEDGYYWITGRVDDVINVSGHRIGTAEVESALVLHDAVAEAAVVGCPHDVKGQAIYAFVTLMAGSQPSEALQQELLALVGKEIGSFAKPDHLQWAPSLPKTRSGKIMRRILRKIACNELDSLGDTSTLADPGVVQGLIDNRLNR.

Residues 190–193 (RGGK), Thr308, and Asn332 contribute to the CoA site. ATP-binding positions include 384–386 (GEP), 408–413 (DTWWQT), Asp497, and Arg512. Ser520 is a binding site for CoA. Arg523 is an ATP binding site. Residues Val534, His536, and Val539 each contribute to the Mg(2+) site. Lys606 carries the post-translational modification N6-acetyllysine.

This sequence belongs to the ATP-dependent AMP-binding enzyme family. It depends on Mg(2+) as a cofactor. Post-translationally, acetylated. Deacetylation by the SIR2-homolog deacetylase activates the enzyme.

The enzyme catalyses acetate + ATP + CoA = acetyl-CoA + AMP + diphosphate. Catalyzes the conversion of acetate into acetyl-CoA (AcCoA), an essential intermediate at the junction of anabolic and catabolic pathways. AcsA undergoes a two-step reaction. In the first half reaction, AcsA combines acetate with ATP to form acetyl-adenylate (AcAMP) intermediate. In the second half reaction, it can then transfer the acetyl group from AcAMP to the sulfhydryl group of CoA, forming the product AcCoA. In Pseudomonas aeruginosa (strain ATCC 15692 / DSM 22644 / CIP 104116 / JCM 14847 / LMG 12228 / 1C / PRS 101 / PAO1), this protein is Acetyl-coenzyme A synthetase 2.